The primary structure comprises 298 residues: MTASTSSSYIGRFAPTPSGYLHFGSLVAALASYLDARAVGGRWLLRMEDLDPPREEPGAQAAILKALESYGFEWDGQMIRQSDRHDAYGEVLNRLFQQGLAYACTCSRKQLEPYHGIYPGLCRNLGHAQDDAAIRLRVPELEYRFVDRVQGEYRQHLGREVGDFVIRRRDGLYAYQLAVVLDDAWQGITDIVRGADLLDSTPRQLYLQELLGLSQPRYLHVPLITQPDGHKLGKSYRSPPLTEDQAPPLLLRALRALGQKPPADLDGASVAQIMAWGMAHWDAALIPRTLSVPEAQLS.

L-glutamate contacts are provided by residues Arg12–Thr16 and Glu48. The 'HIGH' region signature appears at Pro15–Ser25. Positions 104, 106, 118, and 122 each coordinate Zn(2+). L-glutamate contacts are provided by Tyr175 and Arg193. The 'KMSKS' region motif lies at Lys231–Ser235. Residue Lys234 participates in ATP binding.

It belongs to the class-I aminoacyl-tRNA synthetase family. GluQ subfamily. Zn(2+) serves as cofactor.

Catalyzes the tRNA-independent activation of glutamate in presence of ATP and the subsequent transfer of glutamate onto a tRNA(Asp). Glutamate is transferred on the 2-amino-5-(4,5-dihydroxy-2-cyclopenten-1-yl) moiety of the queuosine in the wobble position of the QUC anticodon. The polypeptide is Glutamyl-Q tRNA(Asp) synthetase (Pseudomonas fluorescens (strain ATCC BAA-477 / NRRL B-23932 / Pf-5)).